The sequence spans 343 residues: Heat-inducible transcription repressor HrcA (343 aa).

It belongs to the HrcA family.

Functionally, negative regulator of class I heat shock genes (grpE-dnaK-dnaJ and groELS operons). Prevents heat-shock induction of these operons. The polypeptide is Heat-inducible transcription repressor HrcA (Caldanaerobacter subterraneus subsp. tengcongensis (strain DSM 15242 / JCM 11007 / NBRC 100824 / MB4) (Thermoanaerobacter tengcongensis)).